The chain runs to 213 residues: Protein-L-isoaspartate O-methyltransferase (213 aa).

Ser-62 is a catalytic residue.

Belongs to the methyltransferase superfamily. L-isoaspartyl/D-aspartyl protein methyltransferase family.

Its subcellular location is the cytoplasm. The enzyme catalyses [protein]-L-isoaspartate + S-adenosyl-L-methionine = [protein]-L-isoaspartate alpha-methyl ester + S-adenosyl-L-homocysteine. Catalyzes the methyl esterification of L-isoaspartyl residues in peptides and proteins that result from spontaneous decomposition of normal L-aspartyl and L-asparaginyl residues. It plays a role in the repair and/or degradation of damaged proteins. The sequence is that of Protein-L-isoaspartate O-methyltransferase from Idiomarina loihiensis (strain ATCC BAA-735 / DSM 15497 / L2-TR).